A 679-amino-acid polypeptide reads, in one-letter code: tRNA uridine 5-carboxymethylaminomethyl modification enzyme MnmG (679 aa).

FAD is bound at residue 15 to 20 (GAGHAG). Position 314–328 (314–328 (GPRYCPSIEDKIVRF)) interacts with NAD(+).

It belongs to the MnmG family. Homodimer. Heterotetramer of two MnmE and two MnmG subunits. FAD is required as a cofactor.

It localises to the cytoplasm. In terms of biological role, NAD-binding protein involved in the addition of a carboxymethylaminomethyl (cmnm) group at the wobble position (U34) of certain tRNAs, forming tRNA-cmnm(5)s(2)U34. This chain is tRNA uridine 5-carboxymethylaminomethyl modification enzyme MnmG, found in Roseiflexus sp. (strain RS-1).